A 423-amino-acid chain; its full sequence is UDP-N-acetylglucosamine 1-carboxyvinyltransferase (423 aa).

22–23 (KN) contacts phosphoenolpyruvate. Arg-93 contacts UDP-N-acetyl-alpha-D-glucosamine. Catalysis depends on Cys-117, which acts as the Proton donor. Cys-117 carries the 2-(S-cysteinyl)pyruvic acid O-phosphothioketal modification. UDP-N-acetyl-alpha-D-glucosamine is bound by residues 122–126 (RPVDL), Asp-308, and Ile-330.

It belongs to the EPSP synthase family. MurA subfamily.

It is found in the cytoplasm. The enzyme catalyses phosphoenolpyruvate + UDP-N-acetyl-alpha-D-glucosamine = UDP-N-acetyl-3-O-(1-carboxyvinyl)-alpha-D-glucosamine + phosphate. It functions in the pathway cell wall biogenesis; peptidoglycan biosynthesis. In terms of biological role, cell wall formation. Adds enolpyruvyl to UDP-N-acetylglucosamine. The polypeptide is UDP-N-acetylglucosamine 1-carboxyvinyltransferase (Maricaulis maris (strain MCS10) (Caulobacter maris)).